The sequence spans 633 residues: UvrABC system protein C (633 aa).

In terms of domain architecture, GIY-YIG spans 37–115 (PKPGVYRMFG…IKSLKPRFNI (79 aa)). Residues 225–260 (NALREDLQTRMAQASEAMDFETAAKLRDRIRAIAAV) enclose the UVR domain.

The protein belongs to the UvrC family. In terms of assembly, interacts with UvrB in an incision complex.

It is found in the cytoplasm. In terms of biological role, the UvrABC repair system catalyzes the recognition and processing of DNA lesions. UvrC both incises the 5' and 3' sides of the lesion. The N-terminal half is responsible for the 3' incision and the C-terminal half is responsible for the 5' incision. The protein is UvrABC system protein C of Maricaulis maris (strain MCS10) (Caulobacter maris).